A 299-amino-acid chain; its full sequence is Coenzyme PQQ synthesis protein B (299 aa).

This sequence belongs to the PqqB family.

The protein operates within cofactor biosynthesis; pyrroloquinoline quinone biosynthesis. In terms of biological role, may be involved in the transport of PQQ or its precursor to the periplasm. This Methylorubrum extorquens (strain PA1) (Methylobacterium extorquens) protein is Coenzyme PQQ synthesis protein B.